The chain runs to 487 residues: ATP-dependent rRNA helicase RRP3 (487 aa).

Residues 22-67 (IKRKALEKQQQAHANEPSPSDEDSAQSNSKDSNSNEQPEESEEIFE) form a disordered region. The short motif at 67–95 (ESFTELDLVPELIEACKNLNYNKPTPIQS) is the Q motif element. One can recognise a Helicase ATP-binding domain in the interval 98–270 (IPPALKGSDI…RASLTNPVKC (173 aa)). Residue 111–118 (AQTGSGKT) participates in ATP binding. Residues 217–220 (DEAD) carry the DEAD box motif. Positions 298 to 442 (LIYLLNEFIG…ENVDKDAILA (145 aa)) constitute a Helicase C-terminal domain. A disordered region spans residues 459-487 (NRRNKEKQARGKGRRGRMATRDNMDREER). Residues 477 to 487 (ATRDNMDREER) are compositionally biased toward basic and acidic residues.

Belongs to the DEAD box helicase family. DDX47/RRP3 subfamily. As to quaternary structure, interacts with the SSU processome.

The protein resides in the nucleus. It carries out the reaction ATP + H2O = ADP + phosphate + H(+). ATP-dependent rRNA helicase required for pre-ribosomal RNA processing. Involved in the maturation of the 35S-pre-rRNA and to its cleavage to mature 18S rRNA. This chain is ATP-dependent rRNA helicase RRP3, found in Kluyveromyces lactis (strain ATCC 8585 / CBS 2359 / DSM 70799 / NBRC 1267 / NRRL Y-1140 / WM37) (Yeast).